Reading from the N-terminus, the 349-residue chain is Protein Wnt-7a (349 aa).

The first 31 residues, 1 to 31 (MNRKARRCLGHLFLSLGMVYLRIGGFSSVVA), serve as a signal peptide directing secretion. Intrachain disulfides connect Cys73-Cys84, Cys123-Cys131, Cys133-Cys152, Cys200-Cys214, and Cys202-Cys209. Asn83 and Asn127 each carry an N-linked (GlcNAc...) asparagine glycan. Ser206 carries the O-palmitoleoyl serine; by PORCN lipid modification. The segment at 238 to 266 (VEPVRASRNKRPTFLKIKKPLSYRKPMDT) is disordered linker. Intrachain disulfides connect Cys278–Cys309, Cys294–Cys304, Cys308–Cys348, Cys324–Cys339, Cys326–Cys336, and Cys331–Cys332. Asn295 carries an N-linked (GlcNAc...) asparagine glycan.

Belongs to the Wnt family. In terms of assembly, forms a soluble 1:1 complex with AFM; this prevents oligomerization and is required for prolonged biological activity. The complex with AFM may represent the physiological form in body fluids. Interacts with PORCN. Interacts (via intrinsically disordered linker region) with RECK; interaction with RECK confers ligand selectivity for Wnt7 in brain endothelial cells and allows these cells to selectively respond to Wnt7. Interacts with FZD5. Palmitoleoylation is required for efficient binding to frizzled receptors. Depalmitoleoylation leads to Wnt signaling pathway inhibition.

The protein resides in the secreted. It localises to the extracellular space. The protein localises to the extracellular matrix. Its function is as follows. Ligand for members of the frizzled family of seven transmembrane receptors that functions in the canonical Wnt/beta-catenin signaling pathway. Plays an important role in embryonic development, including dorsal versus ventral patterning during limb development, skeleton development and urogenital tract development. Required for central nervous system (CNS) angiogenesis and blood-brain barrier regulation. Required for normal, sexually dimorphic development of the Mullerian ducts, and for normal fertility in both sexes. Required for normal neural stem cell proliferation in the hippocampus dentate gyrus. Required for normal progress through the cell cycle in neural progenitor cells, for self-renewal of neural stem cells, and for normal neuronal differentiation and maturation. Promotes formation of synapses via its interaction with FZD5. This is Protein Wnt-7a (WNT7A) from Pongo pygmaeus (Bornean orangutan).